A 101-amino-acid polypeptide reads, in one-letter code: NADH-ubiquinone oxidoreductase chain 5 (101 aa).

3 helical membrane passes run 12 to 32, 48 to 68, and 79 to 99; these read IALF…SGVI, FLFI…FICF, and LVIY…LFII.

The protein belongs to the complex I subunit 5 family.

It is found in the mitochondrion inner membrane. It carries out the reaction a ubiquinone + NADH + 5 H(+)(in) = a ubiquinol + NAD(+) + 4 H(+)(out). Functionally, core subunit of the mitochondrial membrane respiratory chain NADH dehydrogenase (Complex I) that is believed to belong to the minimal assembly required for catalysis. Complex I functions in the transfer of electrons from NADH to the respiratory chain. The immediate electron acceptor for the enzyme is believed to be ubiquinone. The polypeptide is NADH-ubiquinone oxidoreductase chain 5 (ND5) (Leishmania tarentolae (Sauroleishmania tarentolae)).